A 499-amino-acid chain; its full sequence is Proline--tRNA ligase (499 aa).

Residues 1-17 show a composition bias toward basic and acidic residues; sequence MTKDGGKKDNQGQDKKA. The segment at 1 to 21 is disordered; it reads MTKDGGKKDNQGQDKKAQQYG.

The protein belongs to the class-II aminoacyl-tRNA synthetase family. ProS type 3 subfamily. As to quaternary structure, homodimer.

Its subcellular location is the cytoplasm. It carries out the reaction tRNA(Pro) + L-proline + ATP = L-prolyl-tRNA(Pro) + AMP + diphosphate. Functionally, catalyzes the attachment of proline to tRNA(Pro) in a two-step reaction: proline is first activated by ATP to form Pro-AMP and then transferred to the acceptor end of tRNA(Pro). Can inadvertently accommodate and process cysteine. In Deinococcus radiodurans (strain ATCC 13939 / DSM 20539 / JCM 16871 / CCUG 27074 / LMG 4051 / NBRC 15346 / NCIMB 9279 / VKM B-1422 / R1), this protein is Proline--tRNA ligase (proS).